The primary structure comprises 172 residues: Transcriptional repressor NrdR (172 aa).

The segment at 3–34 (CPFCRHPDSRVVDSRTTDDGTSIRRRRQCPDC) is a zinc-finger region. Residues 46 to 136 (LMVIKRSGVT…VYRAFDSLED (91 aa)) enclose the ATP-cone domain. Residues 152-172 (ERSGGGTCGTGTVPVPAGTAD) are disordered. Over residues 161-172 (TGTVPVPAGTAD) the composition is skewed to low complexity.

The protein belongs to the NrdR family. Requires Zn(2+) as cofactor.

Negatively regulates transcription of bacterial ribonucleotide reductase nrd genes and operons by binding to NrdR-boxes. The protein is Transcriptional repressor NrdR of Streptomyces clavuligerus.